Consider the following 148-residue polypeptide: Translation initiation factor 2 subunit beta (148 aa).

It belongs to the eIF-2-beta/eIF-5 family. In terms of assembly, heterotrimer composed of an alpha, a beta and a gamma chain.

In terms of biological role, eIF-2 functions in the early steps of protein synthesis by forming a ternary complex with GTP and initiator tRNA. This is Translation initiation factor 2 subunit beta (eif2b) from Aeropyrum pernix (strain ATCC 700893 / DSM 11879 / JCM 9820 / NBRC 100138 / K1).